The following is a 61-amino-acid chain: Probable tautomerase SAV1363 (61 aa).

Catalysis depends on Pro2, which acts as the Proton acceptor; via imino nitrogen.

The protein belongs to the 4-oxalocrotonate tautomerase family.

The polypeptide is Probable tautomerase SAV1363 (Staphylococcus aureus (strain Mu50 / ATCC 700699)).